The sequence spans 160 residues: Cytochrome c-type biogenesis protein CcmE (160 aa).

At 1 to 8 the chain is on the cytoplasmic side; the sequence is MNPRRKNR. Residues 9–29 traverse the membrane as a helical; Signal-anchor for type II membrane protein segment; that stretch reads LILVMLVLVGLGLATALVMYA. Topologically, residues 30–160 are periplasmic; that stretch reads LRSNIDLFYT…AVGDNSVRPS (131 aa). Heme-binding residues include H130 and Y134. Basic and acidic residues predominate over residues 133–148; that stretch reads KYTPPEIEDAMKKDHP. The tract at residues 133–160 is disordered; that stretch reads KYTPPEIEDAMKKDHPAQAVGDNSVRPS.

Belongs to the CcmE/CycJ family.

It localises to the cell inner membrane. In terms of biological role, heme chaperone required for the biogenesis of c-type cytochromes. Transiently binds heme delivered by CcmC and transfers the heme to apo-cytochromes in a process facilitated by CcmF and CcmH. In Erwinia tasmaniensis (strain DSM 17950 / CFBP 7177 / CIP 109463 / NCPPB 4357 / Et1/99), this protein is Cytochrome c-type biogenesis protein CcmE.